Reading from the N-terminus, the 347-residue chain is MSALTPASEVILRHSDEFIARHVLFAGDLQDALPAQFDAAGVRVHTNQYHHWQLLSNTLEENVQFGLLATAETLAACDTLIYYWPKSKQEAQFQLANLLSILPVGTDIFVVGENRSGVRSAEEMLADFAQLAKIDSARRCGLYHGRLDKQPEFDADAWWESYQVGGVTVKTLPGVFSRDSLDSGSHLLLSTFNEPFKGSVLDVGCGAGVLASVLAQQSPKIKWTLSDVSAAAIEASRATLAVNNIEAQVIASNVYSDIKGRFEMIISNPPFHDGIQTSLTAAEMLIRGATAHLHVGGKLRIVANSFLPYPALLDAAFGSHEVLAQNGRFKVYQATVGRPPRDPKKKR.

The protein belongs to the methyltransferase superfamily. RsmC family. In terms of assembly, monomer.

It localises to the cytoplasm. It carries out the reaction guanosine(1207) in 16S rRNA + S-adenosyl-L-methionine = N(2)-methylguanosine(1207) in 16S rRNA + S-adenosyl-L-homocysteine + H(+). Functionally, specifically methylates the guanine in position 1207 of 16S rRNA in the 30S particle. This Yersinia pseudotuberculosis serotype O:1b (strain IP 31758) protein is Ribosomal RNA small subunit methyltransferase C.